The sequence spans 206 residues: Two-component response regulator ARR15 (206 aa).

One can recognise a Response regulatory domain in the interval H19 to M146. D79 is subject to 4-aspartylphosphate. The tract at residues A151–G206 is disordered. Over residues D168–V187 the composition is skewed to low complexity.

Belongs to the ARR family. Type-A subfamily. In terms of processing, two-component system major event consists of a His-to-Asp phosphorelay between a sensor histidine kinase (HK) and a response regulator (RR). In plants, the His-to-Asp phosphorelay involves an additional intermediate named Histidine-containing phosphotransfer protein (HPt). This multistep phosphorelay consists of a His-Asp-His-Asp sequential transfer of a phosphate group between first a His and an Asp of the HK protein, followed by the transfer to a conserved His of the HPt protein and finally the transfer to an Asp in the receiver domain of the RR protein.

The protein localises to the nucleus. Functions as a response regulator involved in His-to-Asp phosphorelay signal transduction system. Phosphorylation of the Asp residue in the receiver domain activates the ability of the protein to promote the transcription of target genes. Type-A response regulators seem to act as negative regulators of the cytokinin signaling. The sequence is that of Two-component response regulator ARR15 (ARR15) from Arabidopsis thaliana (Mouse-ear cress).